The chain runs to 284 residues: Bifunctional protein FolD (284 aa).

NADP(+) contacts are provided by residues 166-168 and isoleucine 232; that span reads GAS.

It belongs to the tetrahydrofolate dehydrogenase/cyclohydrolase family. In terms of assembly, homodimer.

It catalyses the reaction (6R)-5,10-methylene-5,6,7,8-tetrahydrofolate + NADP(+) = (6R)-5,10-methenyltetrahydrofolate + NADPH. It carries out the reaction (6R)-5,10-methenyltetrahydrofolate + H2O = (6R)-10-formyltetrahydrofolate + H(+). It functions in the pathway one-carbon metabolism; tetrahydrofolate interconversion. Its function is as follows. Catalyzes the oxidation of 5,10-methylenetetrahydrofolate to 5,10-methenyltetrahydrofolate and then the hydrolysis of 5,10-methenyltetrahydrofolate to 10-formyltetrahydrofolate. The sequence is that of Bifunctional protein FolD from Stutzerimonas stutzeri (strain A1501) (Pseudomonas stutzeri).